A 301-amino-acid chain; its full sequence is ATP synthase gamma chain (301 aa).

This sequence belongs to the ATPase gamma chain family. In terms of assembly, F-type ATPases have 2 components, CF(1) - the catalytic core - and CF(0) - the membrane proton channel. CF(1) has five subunits: alpha(3), beta(3), gamma(1), delta(1), epsilon(1). CF(0) has three main subunits: a, b and c.

It localises to the cell inner membrane. Its function is as follows. Produces ATP from ADP in the presence of a proton gradient across the membrane. The gamma chain is believed to be important in regulating ATPase activity and the flow of protons through the CF(0) complex. The protein is ATP synthase gamma chain of Bordetella parapertussis (strain 12822 / ATCC BAA-587 / NCTC 13253).